We begin with the raw amino-acid sequence, 126 residues long: Bactofilin BacO (126 aa).

This sequence belongs to the bactofilin family. Interacts with BacN and probably also BacP, the 3 proteins colocalize as an extended structure. Interacts with PadC.

The protein localises to the cytoplasm. It is found in the cytoskeleton. In terms of biological role, a non-essential component of the chromosome segregation machinery. Positions the ParA-ParB-parS chromosome segregation machinery within the cell; BacP seems to be the most important bactofilin in this process. Forms a heteropolymeric, subpolar scaffold in the cell; BacP probably forms the core, BacO contributes to position and integrity while BacN does not seem to contribute to assembly. In Myxococcus xanthus (strain DK1622), this protein is Bactofilin BacO.